The sequence spans 265 residues: Hydroxyethylthiazole kinase (265 aa).

Met50 lines the substrate pocket. Residues Arg125 and Thr171 each contribute to the ATP site. Gly198 provides a ligand contact to substrate.

It belongs to the Thz kinase family. Mg(2+) serves as cofactor.

It catalyses the reaction 5-(2-hydroxyethyl)-4-methylthiazole + ATP = 4-methyl-5-(2-phosphooxyethyl)-thiazole + ADP + H(+). Its pathway is cofactor biosynthesis; thiamine diphosphate biosynthesis; 4-methyl-5-(2-phosphoethyl)-thiazole from 5-(2-hydroxyethyl)-4-methylthiazole: step 1/1. Functionally, catalyzes the phosphorylation of the hydroxyl group of 4-methyl-5-beta-hydroxyethylthiazole (THZ). This chain is Hydroxyethylthiazole kinase, found in Salmonella paratyphi A (strain ATCC 9150 / SARB42).